Here is a 168-residue protein sequence, read N- to C-terminus: Ribosome maturation factor RimM (168 aa).

Residues 96–168 (VDEYYWGDLI…TIRVDWQKDW (73 aa)) form the PRC barrel domain.

This sequence belongs to the RimM family. In terms of assembly, binds ribosomal protein uS19.

It localises to the cytoplasm. Its function is as follows. An accessory protein needed during the final step in the assembly of 30S ribosomal subunit, possibly for assembly of the head region. Essential for efficient processing of 16S rRNA. May be needed both before and after RbfA during the maturation of 16S rRNA. It has affinity for free ribosomal 30S subunits but not for 70S ribosomes. This is Ribosome maturation factor RimM from Aromatoleum aromaticum (strain DSM 19018 / LMG 30748 / EbN1) (Azoarcus sp. (strain EbN1)).